A 699-amino-acid chain; its full sequence is UV radiation resistance-associated gene protein (699 aa).

Residues 1-10 show a composition bias toward low complexity; sequence MSASASVGGP. Positions 1–24 are disordered; sequence MSASASVGGPVPQPPPGPAAALPP. Residues 23-149 enclose the C2 domain; the sequence is PPGSAARALH…YLGQQIHARN (127 aa). Residues 200–269 form a sufficient for interaction with STX7; VTI1B AND STX8 region; that stretch reads HRAQCAIKQT…REVALLHKQQ (70 aa). The stretch at 224-305 forms a coiled coil; that stretch reads LRLTSTSNEL…LRKECTAKRE (82 aa). The tract at residues 270 to 442 is sufficient for interaction with VPS16, required for interaction with CEP63; sequence IALQDKGSAF…IAQLRYQHGL (173 aa). The required for interaction with PRKDC, XRCC6 and XRCC5 stretch occupies residues 443–699; the sequence is GTPDLRQTLP…FRRPRRSSDK (257 aa). The segment at 486 to 591 is disordered; sequence GGADVGFSGG…SQEQGEALSG (106 aa). At Ser493 the chain carries Phosphoserine. Ser498 bears the Phosphoserine; by MTOR mark. Position 508 is a phosphoserine (Ser508). Phosphothreonine is present on Thr518. Ser522 is subject to Phosphoserine. Polar residues predominate over residues 523 to 535; sequence YNSALAQPVTTVP. Over residues 545–556 the composition is skewed to low complexity; the sequence is TSLSSSLDTSLD. Ser549 and Ser550 each carry phosphoserine. Positions 557–567 are enriched in basic and acidic residues; sequence FSKENKKKGED. 3 positions are modified to phosphoserine: Ser571, Ser582, and Ser689.

As to quaternary structure, component of the PI3K (PI3KC3/PI3K-III/class III phosphatidylinositol 3-kinase) complex II (PI3KC3-C2) in which the core composed of the catalytic subunit PIK3C3, the regulatory subunit PIK3R4 and BECN1 is associated with UVRAG; in the complex interacts directly with BECN1. PI3KC3-C2 can associate with further regulatory subunits such as RUBCN and probably SH3GLB1/Bif-1. Interacts with SH3GLB1; UVRAG bridges the interaction to BECN1 indicative for an association with the PI3K complex PI3KC3-C2. Interacts with RINT1. Associates with the NRZ complex under basal conditions and dissociates from it under autophagy conditions to associate with the PI3K complex; these complex associations seem to be mutually exclusive. Interacts with VPS16; VPS11; VPS18; VPS33 (VPS33A or VPS33B) and VPS39; indicative for an association with a class C Vps tethering complex (possibly the HOPS complex). Interacts with RAB7A; RAB7A competes with UVRAG for RUBCN binding. Interacts with STX7, VTI1B, STX8. Interacts with PRKDC, XRCC6 and XRCC5; indicative for an association with the DNA-dependent protein kinase complex DNA-PK. Interacts with CEP63. Directly interacts with FEZ1 and SCOC; the interaction with SCOC is reduced by amino acid starvation, but the complex is stabilized in the presence of FEZ1. Interacts with BECN1P1/BECN2. Interacts with SLAMF1. Interacts with RUBCNL/PACER; promoting targeting of UVRAG to autophagosome. Interacts with WNK1. Phosphorylated at Ser-498 by MTOR under basal conditions; increases the interaction with RUBCN implicated in inhibitory effect of RUBCN on PI3KC3 and decreases interaction with RAB7,A and VPS16 and VPS39 (indicative for a class C Vps complex, possibly the HOPS complex). In terms of tissue distribution, highly expressed in brain, lung, kidney and liver.

The protein localises to the late endosome. It localises to the lysosome. Its subcellular location is the cytoplasmic vesicle. The protein resides in the autophagosome. It is found in the early endosome. The protein localises to the endoplasmic reticulum. It localises to the midbody. Its subcellular location is the chromosome. The protein resides in the centromere. Versatile protein that is involved in regulation of different cellular pathways implicated in membrane trafficking. Involved in regulation of the COPI-dependent retrograde transport from Golgi and the endoplasmic reticulum by associating with the NRZ complex; the function is dependent on its binding to phosphatidylinositol 3-phosphate (PtdIns(3)P). During autophagy acts as a regulatory subunit of the alternative PI3K complex II (PI3KC3-C2) that mediates formation of phosphatidylinositol 3-phosphate and is believed to be involved in maturation of autophagosomes and endocytosis. Activates lipid kinase activity of PIK3C3. Involved in the regulation of degradative endocytic trafficking and cytokinesis, and in regulation of ATG9A transport from the Golgi to the autophagosome; the functions seems to implicate its association with PI3KC3-C2. Involved in maturation of autophagosomes and degradative endocytic trafficking independently of BECN1 but depending on its association with a class C Vps complex (possibly the HOPS complex); the association is also proposed to promote autophagosome recruitment and activation of Rab7 and endosome-endosome fusion events. Enhances class C Vps complex (possibly HOPS complex) association with a SNARE complex and promotes fusogenic SNARE complex formation during late endocytic membrane fusion. In case of negative-strand RNA virus infection is required for efficient virus entry, promotes endocytic transport of virions and is implicated in a VAMP8-specific fusogenic SNARE complex assembly. In terms of biological role, involved in maintaining chromosomal stability. Promotes DNA double-strand break (DSB) repair by association with DNA-dependent protein kinase complex DNA-PK and activating it in non-homologous end joining (NHEJ). Required for centrosome stability and proper chromosome segregation. The sequence is that of UV radiation resistance-associated gene protein (UVRAG) from Homo sapiens (Human).